The primary structure comprises 225 residues: 2-C-methyl-D-erythritol 4-phosphate cytidylyltransferase (225 aa).

Belongs to the IspD/TarI cytidylyltransferase family. IspD subfamily.

The catalysed reaction is 2-C-methyl-D-erythritol 4-phosphate + CTP + H(+) = 4-CDP-2-C-methyl-D-erythritol + diphosphate. The protein operates within isoprenoid biosynthesis; isopentenyl diphosphate biosynthesis via DXP pathway; isopentenyl diphosphate from 1-deoxy-D-xylulose 5-phosphate: step 2/6. Catalyzes the formation of 4-diphosphocytidyl-2-C-methyl-D-erythritol from CTP and 2-C-methyl-D-erythritol 4-phosphate (MEP). The polypeptide is 2-C-methyl-D-erythritol 4-phosphate cytidylyltransferase (Haemophilus influenzae (strain PittEE)).